Consider the following 3225-residue polypeptide: Intermembrane lipid transfer protein VPS13 (3225 aa).

The involved in phospholipid binding stretch occupies residues 1-1390 (MLEGLVAGLL…VFAADVEQHT (1390 aa)). The region spanning 2 to 115 (LEGLVAGLLN…RHRLKMEKLD (114 aa)) is the Chorein N-terminal domain. Disordered regions lie at residues 1568 to 1610 (PEAP…QQLV) and 1768 to 1799 (AGLKHRTASGKGTSTLATRTRHASQSAASHSG). Low complexity predominate over residues 1590–1610 (VRVGSSGRHSESSAGSGQQLV). The span at 1777-1799 (GKGTSTLATRTRHASQSAASHSG) shows a compositional bias: polar residues. Residues 2290–2570 (FKVTVYSPYV…PYAWDFPAAK (281 aa)) form the SHR-BD domain.

This sequence belongs to the VPS13 family.

It is found in the membrane. Its function is as follows. Mediates the transfer of lipids between membranes at organelle contact sites. Binds phospholipids, including phosphatidylcholine (PC), phosphatidylethanolamine (PE), phosphatidic acid (PA), and phosphatidylserine (PS). May play a role in mitochondrial lipid homeostasis, Golgi vesicle transport, reticulophagy, actin cytoskeleton organization and formation of the prospore membrane. The polypeptide is Intermembrane lipid transfer protein VPS13 (Chaetomium thermophilum (strain DSM 1495 / CBS 144.50 / IMI 039719) (Thermochaetoides thermophila)).